Reading from the N-terminus, the 372-residue chain is Cyclic GMP-AMP synthase-like receptor (372 aa).

Residue threonine 68 participates in GTP binding. Residues serine 70 and 82-84 (EFD) each bind ATP. Mg(2+) contacts are provided by glutamate 82, aspartate 84, and aspartate 190. GTP-binding positions include aspartate 190 and 236 to 243 (LVCAPYWE). Residues 240 to 243 (PYWE), lysine 261, and 274 to 278 (SYTIK) contribute to the ATP site.

It belongs to the mab-21 family. The cofactor is Mg(2+). Mn(2+) is required as a cofactor.

The enzyme catalyses GTP + ATP = 3',2'-cGAMP + 2 diphosphate. It catalyses the reaction GTP + ATP = pppA(2'-5')pG + diphosphate. It carries out the reaction pppA(2'-5')pG = 3',2'-cGAMP + diphosphate. The enzyme activity is specifically activated by double-stranded RNA (dsRNA). Functionally, nucleotidyltransferase that catalyzes the formation of cyclic GMP-AMP (3',2'-cGAMP) from ATP and GTP and plays a key role in innate immunity. Synthesizes 3',2'-cGAMP in a two-step reaction through production of the linear intermediate pppA(2'-5')pG. Acts as a key sensor of double-stranded RNA (dsRNA), the presence of dsRNA in the cytoplasm being a danger signal that triggers the immune responses. Directly binds dsRNA longer than 15 bp, activating the nucleotidyltransferase activity, leading to synthesis of 3',2'-cGAMP, a second messenger that binds to and activates Sting, thereby triggering the antiviral immune response via activation of the NF-kappa-B transcription factor Rel (Relish). This Drosophila eugracilis (Fruit fly) protein is Cyclic GMP-AMP synthase-like receptor.